Consider the following 507-residue polypeptide: MEEFKRYLELDRSQQHDFIYPLIFQEYIYALARGRVLNGSIFFENAGYDNKSSLLIVKRLITHLITQMYQQNHFLFYTNDFNPNKFLGCNTNLYYQMIFEGFAVVVEIPFYLRLVSFLEGKERVKSHNLRSLHSIFPFLEDKFSHLNSLLDILIPHPVHLEILVQTLRYWVKDPSSLHLLRFFLHEYPNWNSLMTPKKFSFYFSKRNQRFFFFLYNFHVCEYESIFVFLRNQSSHLCSISSEIFLERISFYKKIELEEVFTKNFKAFLWAFKDPFLHYVRYRGKSFLASKDXXLLMNKWKYYLVNFWECYFSIWSQPRRIHINQLSNNCVDFLGYLLSVRLKPSMVRSQMIENSFLIENASKQFDTLVPITLLIRYLSKAKFCNVLGHPMSKPVWAALSDSDIIERFGRIYRNLSHYHSGSLKKISLYRIKYILRLSCARTLARKHKSTVRSFLKRLGMGLLEEFFTEEEQVFYLTFPKASSTSGKLYQGRIWYLDIFCINDPANHE.

The protein belongs to the intron maturase 2 family. MatK subfamily.

The protein resides in the plastid. It localises to the chloroplast. Usually encoded in the trnK tRNA gene intron. Probably assists in splicing its own and other chloroplast group II introns. The polypeptide is Maturase K (Lyonia lucida (Fetterbush)).